Here is a 160-residue protein sequence, read N- to C-terminus: Large ribosomal subunit protein bL17 (160 aa).

Residues 123–141 (DEKRQKRAEARAKRREEMQ) show a composition bias toward basic and acidic residues. The tract at residues 123 to 160 (DEKRQKRAEARAKRREEMQKAMAEQQQAEGGEPEGGNE) is disordered. The span at 142-152 (KAMAEQQQAEG) shows a compositional bias: low complexity.

Belongs to the bacterial ribosomal protein bL17 family. Part of the 50S ribosomal subunit. Contacts protein L32.

This is Large ribosomal subunit protein bL17 from Acidobacterium capsulatum (strain ATCC 51196 / DSM 11244 / BCRC 80197 / JCM 7670 / NBRC 15755 / NCIMB 13165 / 161).